Consider the following 443-residue polypeptide: UDP-N-acetylmuramate--L-alanine ligase (443 aa).

111–117 lines the ATP pocket; it reads GAHGKTS.

Belongs to the MurCDEF family.

The protein localises to the cytoplasm. It catalyses the reaction UDP-N-acetyl-alpha-D-muramate + L-alanine + ATP = UDP-N-acetyl-alpha-D-muramoyl-L-alanine + ADP + phosphate + H(+). The protein operates within cell wall biogenesis; peptidoglycan biosynthesis. Cell wall formation. This Ligilactobacillus salivarius (strain UCC118) (Lactobacillus salivarius) protein is UDP-N-acetylmuramate--L-alanine ligase.